Consider the following 167-residue polypeptide: Putative defense protein Hdd11-like (167 aa).

The signal sequence occupies residues 1 to 18; it reads MMFTYVVAVASVVALTSA. The 149-residue stretch at 19-167 folds into the Reelin domain; sequence YPTGAPPSAC…ESAPVKVLSH (149 aa). Cysteines 28 and 105 form a disulfide.

This sequence belongs to the insect defense protein family. As to expression, in larvae, high expression in the fat body and low expression in midgut, hemocytes and malpighian tubules. No expression in silkgland.

The protein localises to the secreted. In terms of biological role, may have antimicrobial activity. This is Putative defense protein Hdd11-like from Samia ricini (Indian eri silkmoth).